A 329-amino-acid chain; its full sequence is Aspartate--ammonia ligase (329 aa).

It belongs to the class-II aminoacyl-tRNA synthetase family. AsnA subfamily.

It is found in the cytoplasm. It carries out the reaction L-aspartate + NH4(+) + ATP = L-asparagine + AMP + diphosphate + H(+). It participates in amino-acid biosynthesis; L-asparagine biosynthesis; L-asparagine from L-aspartate (ammonia route): step 1/1. This chain is Aspartate--ammonia ligase, found in Ureaplasma parvum serovar 3 (strain ATCC 27815 / 27 / NCTC 11736).